The chain runs to 374 residues: MPTDYYEILGVSRDAGKEDIKRAYRRLARKYHPDVNKEPGAEEHFKEINRAYEILSEPETRNRYDRFGEAGVSGGAAGFDPDNMGGFADIFETIFSGFGGMGGQATARRRTGPTRGEDLRLDFRLKFREAVFGGEKEIRIRHLETCQTCKGSGARPGTSSRTCTTCSGTGQVRRATRTPFGTFAQVSVCPTCDGAGEVIEEKCDVCGGSGRRQETKKLKITIPAGVDNGMKLRVAREGDAGLKGGPPGDLFVYLTVETDAEFQREGNDIKSDITISYIQAILGCTIKVNTVDGQEDLTIPAGTQPNTVLILENKGVPKLGNPVSRGDHRITVKISIPTRVTGEERELLEKLAKVRGETVGKGGIEGFLGNIFHK.

The 65-residue stretch at 4-68 (DYYEILGVSR…ETRNRYDRFG (65 aa)) folds into the J domain. The CR-type zinc-finger motif lies at 133 to 215 (GGEKEIRIRH…CGGSGRRQET (83 aa)). Zn(2+) contacts are provided by Cys146, Cys149, Cys163, Cys166, Cys189, Cys192, Cys203, and Cys206. CXXCXGXG motif repeat units lie at residues 146–153 (CQTCKGSG), 163–170 (CTTCSGTG), 189–196 (CPTCDGAG), and 203–210 (CDVCGGSG).

This sequence belongs to the DnaJ family. As to quaternary structure, homodimer. The cofactor is Zn(2+).

The protein resides in the cytoplasm. In terms of biological role, participates actively in the response to hyperosmotic and heat shock by preventing the aggregation of stress-denatured proteins and by disaggregating proteins, also in an autonomous, DnaK-independent fashion. Unfolded proteins bind initially to DnaJ; upon interaction with the DnaJ-bound protein, DnaK hydrolyzes its bound ATP, resulting in the formation of a stable complex. GrpE releases ADP from DnaK; ATP binding to DnaK triggers the release of the substrate protein, thus completing the reaction cycle. Several rounds of ATP-dependent interactions between DnaJ, DnaK and GrpE are required for fully efficient folding. Also involved, together with DnaK and GrpE, in the DNA replication of plasmids through activation of initiation proteins. The sequence is that of Chaperone protein DnaJ from Microcystis aeruginosa (strain NIES-843 / IAM M-2473).